Here is a 503-residue protein sequence, read N- to C-terminus: Aromatase (503 aa).

3 consecutive transmembrane segments (helical) span residues 19-39 (EVAP…LLVW), 51-71 (GYFL…MGIG), and 303-323 (MLIA…FLIA). Aspartate 309 and methionine 374 together coordinate substrate. Cysteine 437 lines the heme pocket.

It belongs to the cytochrome P450 family. It depends on heme as a cofactor.

It is found in the endoplasmic reticulum membrane. The protein localises to the microsome membrane. It carries out the reaction testosterone + 3 reduced [NADPH--hemoprotein reductase] + 3 O2 = 17beta-estradiol + formate + 3 oxidized [NADPH--hemoprotein reductase] + 4 H2O + 4 H(+). It catalyses the reaction androst-4-ene-3,17-dione + 3 reduced [NADPH--hemoprotein reductase] + 3 O2 = estrone + formate + 3 oxidized [NADPH--hemoprotein reductase] + 4 H2O + 4 H(+). The catalysed reaction is androst-4-ene-3,17-dione + reduced [NADPH--hemoprotein reductase] + O2 = 19-hydroxyandrost-4-ene-3,17-dione + oxidized [NADPH--hemoprotein reductase] + H2O + H(+). The enzyme catalyses 19-hydroxyandrost-4-ene-3,17-dione + reduced [NADPH--hemoprotein reductase] + O2 = 19-oxo-androst-4-ene-3,17-dione + oxidized [NADPH--hemoprotein reductase] + 2 H2O + H(+). It carries out the reaction 19-oxo-androst-4-ene-3,17-dione + reduced [NADPH--hemoprotein reductase] + O2 = estrone + formate + oxidized [NADPH--hemoprotein reductase] + H2O + 2 H(+). It catalyses the reaction estrone + reduced [NADPH--hemoprotein reductase] + O2 = 2-hydroxyestrone + oxidized [NADPH--hemoprotein reductase] + H2O + H(+). The catalysed reaction is 17beta-hydroxy-5alpha-androstan-3-one + reduced [NADPH--hemoprotein reductase] + O2 = 17beta,19-dihydroxy-3-oxo-5alpha-androstanone + oxidized [NADPH--hemoprotein reductase] + H2O + H(+). The enzyme catalyses 17beta,19-dihydroxy-3-oxo-5alpha-androstanone + reduced [NADPH--hemoprotein reductase] + O2 = 17beta-hydroxy-3,19-dioxo-5alpha-androstanone + oxidized [NADPH--hemoprotein reductase] + 2 H2O + H(+). It carries out the reaction 17beta-hydroxy-3,19-dioxo-5alpha-androstanone + reduced [NADPH--hemoprotein reductase] + O2 = 17beta-hydroxy-3-oxo-19-nor-5alpha-androst-1-ene + formate + oxidized [NADPH--hemoprotein reductase] + H2O + 2 H(+). It participates in steroid hormone biosynthesis. In terms of biological role, a cytochrome P450 monooxygenase that catalyzes the conversion of C19 androgens, androst-4-ene-3,17-dione (androstenedione) and testosterone to the C18 estrogens, estrone and estradiol, respectively. Catalyzes three successive oxidations of C19 androgens: two conventional oxidations at C19 yielding 19-hydroxy and 19-oxo/19-aldehyde derivatives, followed by a third oxidative aromatization step that involves C1-beta hydrogen abstraction combined with cleavage of the C10-C19 bond to yield a phenolic A ring and formic acid. Alternatively, the third oxidative reaction yields a 19-norsteroid and formic acid. Converts dihydrotestosterone to delta1,10-dehydro 19-nordihydrotestosterone and may play a role in homeostasis of this potent androgen. Also displays 2-hydroxylase activity toward estrone. Mechanistically, uses molecular oxygen inserting one oxygen atom into a substrate, and reducing the second into a water molecule, with two electrons provided by NADPH via cytochrome P450 reductase (CPR; NADPH-ferrihemoprotein reductase). The chain is Aromatase (CYP19A1) from Leucopleurus acutus (Atlantic white-sided dolphin).